The chain runs to 411 residues: Alpha-1-antiproteinase (411 aa).

The signal sequence occupies residues 1 to 24 (MAPSISRGLLLLAALCCLAPSFLA). The residue at position 33 (Ser33) is a Phosphoserine. 3 N-linked (GlcNAc...) asparagine glycosylation sites follow: Asn64, Asn101, and Asn265. An RCL region spans residues 367-386 (GATVVEAVPMSLPPQVKFDH). Ser377 carries the post-translational modification Phosphoserine.

Belongs to the serpin family. In terms of assembly, interacts with CELA2A. Interacts with ERGIC3 and LMAN1/ERGIC53. Interacts with PRSS1/Trypsin. As to expression, plasma.

Its subcellular location is the secreted. Inhibitor of serine proteases. The primary target is elastase, but also has a moderate affinity for plasmin and thrombin. This is Alpha-1-antiproteinase (Serpina1) from Rattus norvegicus (Rat).